The sequence spans 549 residues: Arginine-containing cyclodipeptide synthase amaA (549 aa).

Positions 445–449 (DDRAE) match the Conserved DDXXE motif motif.

Belongs to the arginine-containing cyclodipeptide synthase family.

It carries out the reaction L-prolyl-tRNA(Pro) + L-arginyl-tRNA(Arg) = cyclo(L-arginyl-L-prolyl) + tRNA(Pro) + tRNA(Arg) + 2 H(+). Its pathway is secondary metabolite biosynthesis. Its function is as follows. Arginine-containing cyclodipeptide synthase; part of the cluster that mediates the biosynthesis of a highly modified cyclo-arginine-proline dipeptide (cRP). Within the pathway, amaA acts as the scaffold-generating enzyme and is responsible for formation of the cyclo-Arg-Pro diketopiperazine (cRW) from L-arginyl-tRNA(Arg) + L-prolyl-tRNA(Pro). Additional enzymes from the cluster then further modify the cyclo-Arg-Pro diketopiperazine (cRW) scaffold. In Apiospora montagnei (Sphaeria apiospora), this protein is Arginine-containing cyclodipeptide synthase amaA.